The following is a 79-amino-acid chain: Conotoxin VnMKLT1-01121 (79 aa).

Residues M1–A22 form the signal peptide. The propeptide occupies D23–N48. 3 disulfide bridges follow: C53–C70, C60–C74, and C69–C78.

The protein belongs to the conotoxin O1 superfamily. In terms of tissue distribution, expressed by the venom duct.

It is found in the secreted. The polypeptide is Conotoxin VnMKLT1-01121 (Conus ventricosus (Mediterranean cone)).